The sequence spans 246 residues: ABC transporter ATP-binding protein NatA (246 aa).

Residues 2–237 (ITLTDCSRRF…ERSEDLNYIF (236 aa)) enclose the ABC transporter domain. 38-45 (GENGAGKT) contacts ATP.

It belongs to the ABC transporter superfamily. In terms of assembly, the complex is composed of NatA and NatB.

It carries out the reaction Na(+)(in) + ATP + H2O = Na(+)(out) + ADP + phosphate + H(+). Part of an ABC transporter that catalyzes ATP-dependent electrogenic sodium extrusion. The protein is ABC transporter ATP-binding protein NatA of Bacillus subtilis (strain 168).